We begin with the raw amino-acid sequence, 386 residues long: Cystathionine gamma-synthase (386 aa).

Lys198 carries the N6-(pyridoxal phosphate)lysine modification.

It belongs to the trans-sulfuration enzymes family. Homotetramer. Requires pyridoxal 5'-phosphate as cofactor.

The protein resides in the cytoplasm. The catalysed reaction is O-succinyl-L-homoserine + L-cysteine = L,L-cystathionine + succinate + H(+). Its pathway is amino-acid biosynthesis; L-methionine biosynthesis via de novo pathway; L-cystathionine from O-succinyl-L-homoserine: step 1/1. Its function is as follows. Catalyzes the formation of L-cystathionine from O-succinyl-L-homoserine (OSHS) and L-cysteine, via a gamma-replacement reaction. In the absence of thiol, catalyzes gamma-elimination to form 2-oxobutanoate, succinate and ammonia. The polypeptide is Cystathionine gamma-synthase (metB) (Escherichia coli (strain K12)).